Here is a 631-residue protein sequence, read N- to C-terminus: tRNA uridine 5-carboxymethylaminomethyl modification enzyme MnmG (631 aa).

FAD contacts are provided by residues 13–18 (GGGHAG), Val-125, and Ser-180. 273–287 (GPRYCPSIEDKVMRF) lines the NAD(+) pocket. Gln-370 is a binding site for FAD.

Belongs to the MnmG family. As to quaternary structure, homodimer. Heterotetramer of two MnmE and two MnmG subunits. Requires FAD as cofactor.

It localises to the cytoplasm. In terms of biological role, NAD-binding protein involved in the addition of a carboxymethylaminomethyl (cmnm) group at the wobble position (U34) of certain tRNAs, forming tRNA-cmnm(5)s(2)U34. This is tRNA uridine 5-carboxymethylaminomethyl modification enzyme MnmG from Vibrio campbellii (strain ATCC BAA-1116).